Consider the following 414-residue polypeptide: Schlafen-like protein 1 (414 aa).

The interval 141 to 203 is disordered; sequence LHHREQDDSG…ISQNRPSGVR (63 aa). The span at 154 to 185 shows a compositional bias: pro residues; that stretch reads SHSPGPSPGPSPGPSPGFRRPPLPQLADPPPN. 268 to 275 contacts ATP; sequence GVEDSGLV. Positions 373–407 form a coiled coil; the sequence is RQKWTAELSKLEEKVDVLTLEKEQLQEQLRQRQTL.

It belongs to the Schlafen family. Subgroup I subfamily.

The polypeptide is Schlafen-like protein 1 (Slfnl1) (Rattus norvegicus (Rat)).